The chain runs to 94 residues: MNSREMFCVFILFASFFYCSYAEQECNCDKSCEPVKDCTFGTAMDKCGCCEVCAVGIGHFCGKFFNNAVCAEGLKCAKLGEGADGEALEICLRA.

Residues Met1–Ala22 form the signal peptide. 6 disulfide bridges follow: Cys19/Cys47, Cys26/Cys49, Cys32/Cys50, Cys38/Cys53, Cys61/Cys76, and Cys70/Cys91. Positions Glu23–Ala94 constitute an IGFBP N-terminal domain.

Expressed by the venom gland.

The protein resides in the secreted. This Lychas mucronatus (Chinese swimming scorpion) protein is Venom protein 59.1.